A 381-amino-acid chain; its full sequence is Cytochrome b (381 aa).

The next 4 membrane-spanning stretches (helical) occupy residues 36–56 (FGSL…FLTM), 80–101 (WLIR…YIHI), 116–136 (WMVG…GYVL), and 181–201 (FYTF…IHLL). His86 and His100 together coordinate heme b. Heme b-binding residues include His185 and His199. His204 lines the a ubiquinone pocket. Transmembrane regions (helical) follow at residues 229-249 (FKDM…TLTN), 291-311 (LGGV…PLTF), 323-343 (MNQI…WIGA), and 350-370 (YVFV…INPM).

It belongs to the cytochrome b family. As to quaternary structure, the main subunits of complex b-c1 are: cytochrome b, cytochrome c1 and the Rieske protein. Requires heme b as cofactor.

The protein resides in the mitochondrion inner membrane. Component of the ubiquinol-cytochrome c reductase complex (complex III or cytochrome b-c1 complex) that is part of the mitochondrial respiratory chain. The b-c1 complex mediates electron transfer from ubiquinol to cytochrome c. Contributes to the generation of a proton gradient across the mitochondrial membrane that is then used for ATP synthesis. The sequence is that of Cytochrome b (MT-CYB) from Ostrinia nubilalis (European corn borer).